A 99-amino-acid polypeptide reads, in one-letter code: Putative pterin-4-alpha-carbinolamine dehydratase (99 aa).

The protein belongs to the pterin-4-alpha-carbinolamine dehydratase family.

It catalyses the reaction (4aS,6R)-4a-hydroxy-L-erythro-5,6,7,8-tetrahydrobiopterin = (6R)-L-erythro-6,7-dihydrobiopterin + H2O. The polypeptide is Putative pterin-4-alpha-carbinolamine dehydratase (Aquifex aeolicus (strain VF5)).